Here is a 421-residue protein sequence, read N- to C-terminus: Tubulin gamma-3 chain (421 aa).

Position 94 to 100 (94 to 100) interacts with GTP; that stretch reads AGGTGSG.

Belongs to the tubulin family.

It is found in the cytoplasm. The protein resides in the cytoskeleton. The protein localises to the microtubule organizing center. Functionally, tubulin is the major constituent of microtubules. The gamma chain is found at microtubule organizing centers (MTOC) such as the spindle poles, suggesting that it is involved in the minus-end nucleation of microtubule assembly. The polypeptide is Tubulin gamma-3 chain (TUBG3) (Zea mays (Maize)).